A 253-amino-acid chain; its full sequence is UPF0174 protein jhp_1494 (253 aa).

The protein belongs to the UPF0174 family.

This chain is UPF0174 protein jhp_1494, found in Helicobacter pylori (strain J99 / ATCC 700824) (Campylobacter pylori J99).